A 154-amino-acid chain; its full sequence is uncharacterized protein (154 aa).

Helical transmembrane passes span 26 to 48 (VSGWLTIIGILVAIAGIIIGVVT), 97 to 119 (IAMFGIALAVYGGIVGLLLLIVF), and 132 to 150 (GLYTFLAIAIFCLMVYCAW).

Its subcellular location is the cell membrane. This is an uncharacterized protein from Archaeoglobus fulgidus (strain ATCC 49558 / DSM 4304 / JCM 9628 / NBRC 100126 / VC-16).